The sequence spans 1039 residues: 3',5'-cyclic-AMP phosphodiesterase 4 (1039 aa).

The signal sequence occupies residues Met1–Ile29. 3 N-linked (GlcNAc...) asparagine glycosylation sites follow: Asn11, Asn34, and Asn37. At Asp30–Arg201 the chain is on the extracellular side. Disordered regions lie at residues Ser40 to Asn63 and Ile116 to Ile181. Residues Asn45–Asn63 show a composition bias toward low complexity. Residues Asn119, Asn124, Asn131, Asn167, and Asn178 are each glycosylated (N-linked (GlcNAc...) asparagine). The helical transmembrane segment at Gly202–Ala222 threads the bilayer. Over Glu223 to Ser226 the chain is Cytoplasmic. Residues Trp227–Leu247 form a helical membrane-spanning segment. At Glu248 to Pro256 the chain is on the extracellular side. Residues Leu257–Phe277 form a helical membrane-spanning segment. At Ser278–Lys283 the chain is on the cytoplasmic side. The helical transmembrane segment at Tyr284–Ile304 threads the bilayer. At Pro305–His310 the chain is on the extracellular side. The chain crosses the membrane as a helical span at residues Ile311–Trp331. At Phe332–Glu356 the chain is on the cytoplasmic side. The chain crosses the membrane as a helical span at residues Ala357–Ile377. Residues Lys378–Val1039 are Extracellular-facing. A coiled-coil region spans residues Val384–Leu414. N-linked (GlcNAc...) asparagine glycosylation is found at Asn406, Asn430, Asn500, and Asn515. The PDEase domain occupies Pro533–Gln973. The active-site Proton donor is the His609. A divalent metal cation contacts are provided by His613, His648, and Asp649. The interval Phe738–Gln835 is disordered. Residues Thr740–Gln835 are compositionally biased toward low complexity. N-linked (GlcNAc...) asparagine glycosylation is found at Asn769, Asn791, Asn795, Asn804, Asn809, Asn823, and Asn826. Position 861 (Asp861) interacts with a divalent metal cation. N-linked (GlcNAc...) asparagine glycosylation is found at Asn874, Asn944, Asn1018, and Asn1023. Residues Gln978 to Gln1019 are compositionally biased toward low complexity. The segment at Gln978–Ser1033 is disordered. Polar residues predominate over residues Ser1020–Ser1033.

This sequence belongs to the cyclic nucleotide phosphodiesterase family. Requires a divalent metal cation as cofactor.

It localises to the cell membrane. It catalyses the reaction 3',5'-cyclic AMP + H2O = AMP + H(+). Inhibited by 3-isobutyl-1-methylxanthine (IBMX). Its function is as follows. Phosphodiesterase specific for extracellular cAMP. Involved in the degradation of extracellular cAMP specifically during multicellular development. This chain is 3',5'-cyclic-AMP phosphodiesterase 4 (Pde4), found in Dictyostelium discoideum (Social amoeba).